Reading from the N-terminus, the 544-residue chain is Major royal jelly protein 3 (544 aa).

Residues 1 to 20 form the signal peptide; that stretch reads MTKWLLLVVCLGIACQDVTS. An N-linked (GlcNAc...) asparagine glycan is attached at N183. Residues 421-544 are disordered; it reads RYHNQNAGNQ…NQVHHSSKLH (124 aa). 20 repeat units span residues 424 to 428, 429 to 433, 434 to 438, 439 to 443, 444 to 448, 449 to 453, 454 to 458, 459 to 463, 464 to 468, 469 to 473, 474 to 478, 479 to 483, 484 to 488, 489 to 493, 494 to 498, 499 to 503, 504 to 508, 509 to 513, 514 to 518, and 519 to 523. Low complexity-rich tracts occupy residues 424–460, 468–510, and 518–530; these read NQNAGNQNADNQNADNQNANNQNADNQNANKQNGNRQ, NKQN…GNRQ, and NRQNDNQNNQNDN. The interval 424-523 is 23 X 5 AA tandem repeats of [NKR]-[RQ]-N-[AGD]-[DNG]; sequence NQNAGNQNAD…KRNGNRQNDN (100 aa). One copy of the 21; half-length repeat lies at 524–525; it reads QN. 2 tandem repeats follow at residues 526–530 and 531–535.

Belongs to the major royal jelly protein family. In terms of assembly, homoligomer; in the absence of RNA, assembles into a higher-order oligomeric form, composed of around 20 monomer units. As to expression, found in and secreted from the hypopharyngeal glands of the worker honey bee (at protein level); expression peaks at 12 days post eclosion. Expressed in the brains of worker bees. Expressed in the brains of adult worker bees peaking at 12 days post eclosion (at protein level). Expressed in the spermatheca of adult queen bees (at protein level); Expression levels are higher in mated queens than in virgin queens. Expressed in queen bee ovaries and male drone testes. Expression in the head of forager worker bees is lower than in the heads of nurse worker bees.

It is found in the secreted. Abundant protein component of royal jelly, a substance produced in the hypopharyngeal gland containing proteins, free amino acids, fatty acids, sugars and other nutrients, which is fed to developing larvae by worker nurse bees. Major royal jelly proteins (MRJPs) are high in essential amino acids and probably have a nutritional function in larval food. All larvae are fed some royal jelly (also known as worker jelly) early in their development but it forms the principal source of nutrition for larvae destined to become queen bees. Secreted RNA-binding protein required to concentrate, stabilize and enhance environmental RNA bioavailability in the honey bee royal jelly. Acts as a RNA-aggregating protein: binds 18 nucleotides and longer single- and double-stranded RNA (ssRNA and dsRNA, respectively) in a non-specific manner. RNA-binding drives super-order assembly of oligomers into extracellular ribonucleoprotein granules that concentrate, protect and enhance RNA uptake granules, facilitating RNA transfer among bees. Produced in the spermatheca of adult queen bees, along with other major royal jelly proteins, where it may act as a nutrient supply for sperm stored by mated queens, or be involved in energy metabolism. This Apis mellifera (Honeybee) protein is Major royal jelly protein 3.